The following is a 288-amino-acid chain: DegV domain-containing protein SAS0714 (288 aa).

The DegV domain occupies 3-282 (IAVMTDSTSY…SGGLGLGYVG (280 aa)). 2 residues coordinate hexadecanoate: Thr62 and Ser95.

Its function is as follows. May bind long-chain fatty acids, such as palmitate, and may play a role in lipid transport or fatty acid metabolism. The sequence is that of DegV domain-containing protein SAS0714 from Staphylococcus aureus (strain MSSA476).